Consider the following 179-residue polypeptide: Large ribosomal subunit protein uL5 (179 aa).

The protein belongs to the universal ribosomal protein uL5 family. In terms of assembly, part of the 50S ribosomal subunit; part of the 5S rRNA/L5/L18/L25 subcomplex. Contacts the 5S rRNA and the P site tRNA. Forms a bridge to the 30S subunit in the 70S ribosome.

Functionally, this is one of the proteins that bind and probably mediate the attachment of the 5S RNA into the large ribosomal subunit, where it forms part of the central protuberance. In the 70S ribosome it contacts protein S13 of the 30S subunit (bridge B1b), connecting the 2 subunits; this bridge is implicated in subunit movement. Contacts the P site tRNA; the 5S rRNA and some of its associated proteins might help stabilize positioning of ribosome-bound tRNAs. The polypeptide is Large ribosomal subunit protein uL5 (Rickettsia typhi (strain ATCC VR-144 / Wilmington)).